Here is a 136-residue protein sequence, read N- to C-terminus: Large ribosomal subunit protein uL16c (136 aa).

The segment at Met-1–Lys-20 is disordered.

Belongs to the universal ribosomal protein uL16 family. As to quaternary structure, part of the 50S ribosomal subunit.

The protein resides in the plastid. It is found in the chloroplast. The polypeptide is Large ribosomal subunit protein uL16c (Agrostis stolonifera (Creeping bentgrass)).